Here is a 473-residue protein sequence, read N- to C-terminus: Cannabinoid receptor 1 (473 aa).

Residues 1–118 lie on the Extracellular side of the membrane; that stretch reads MKSILDGLAD…CFMILNPSQQ (118 aa). The tract at residues 2-23 is required for mitochondrial localization; that stretch reads KSILDGLADTTFRTITTDLLYV. N-linked (GlcNAc...) asparagine glycosylation is found at Asn79 and Asn85. A helical transmembrane segment spans residues 119-144; it reads LAIAVLSLTLGTFTVLENLLVLCVIL. At 145-156 the chain is on the cytoplasmic side; the sequence is HSRSLRCRPSYH. Residues 157 to 177 form a helical membrane-spanning segment; that stretch reads FIGSLAVADLLGSVIFVYSFV. At 178 to 189 the chain is on the extracellular side; the sequence is DFHVFHRKDSPN. A helical membrane pass occupies residues 190 to 214; that stretch reads VFLFKLGGVTASFTASVGSLFLTAI. The Cytoplasmic portion of the chain corresponds to 215–234; the sequence is DRYISIHRPLAYKRIVTRPK. Residues 235-257 form a helical membrane-spanning segment; sequence AVVAFCVMWTIAIVIAVLPLLGW. The Extracellular segment spans residues 258-275; that stretch reads NCKKLNSVCSDIFPLIDE. The helical transmembrane segment at 276–301 threads the bilayer; it reads TYLMFWIGVTSILLLFIVYAYMYILW. Residues 302–346 lie on the Cytoplasmic side of the membrane; it reads KAHSHAVRMLQRGTQKSIIIQSTEDGKVQITRPDQTRMDIRLAKT. A helical membrane pass occupies residues 347-367; the sequence is LVLILVVLIICWGPLLAIMVY. Residues 368-379 lie on the Extracellular side of the membrane; sequence DVFGKMNKLIKT. A helical membrane pass occupies residues 380–401; it reads IFAFCSMLCLLNSTVNPIIYAL. Residues 402 to 473 lie on the Cytoplasmic side of the membrane; the sequence is RSKDLRHAFR…VSTDTTAEAL (72 aa). Cys417 carries the S-palmitoyl cysteine lipid modification.

It belongs to the G-protein coupled receptor 1 family. Palmitoylation at Cys-417 is important for recruitment at both plasma membrane and lipid rafts and association with G protein alpha subunits.

It localises to the cell membrane. It is found in the mitochondrion outer membrane. Its subcellular location is the cell projection. The protein resides in the axon. The protein localises to the presynapse. Functionally, G-protein coupled receptor for cannabinoids. Mediates many cannabinoid-induced effects in the central nervous system (CNS), as well as in peripheral tissues. Regulates cellular respiration and energy production in response to cannabinoids. Signaling typically involves reduction in cyclic AMP. The sequence is that of Cannabinoid receptor 1 (CNR1) from Taeniopygia guttata (Zebra finch).